Consider the following 60-residue polypeptide: Stress response protein YkoL (60 aa).

This Bacillus subtilis (strain 168) protein is Stress response protein YkoL (ykoL).